A 555-amino-acid chain; its full sequence is GPI-anchor transamidase component PIGS (555 aa).

Topologically, residues 2–18 (ATAGAAATDLEVVRGKR) are cytoplasmic. R15 and R18 together coordinate a cardiolipin. The helical transmembrane segment at 19-39 (AALFFAAVAILLGLPLWWKTT) threads the bilayer. Residues 40-517 (ETYRAPLPYS…LHLLYFPDDQ (478 aa)) lie on the Lumenal side of the membrane. 2 N-linked (GlcNAc...) asparagine glycosylation sites follow: N267 and N370. Residues 518-532 (KFAIYIPLFLPMAVP) form a helical membrane-spanning segment. Residues 533 to 555 (ILLSLVKIFLETHKSWKKPEKID) are Cytoplasmic-facing.

The protein belongs to the PIGS family. In terms of assembly, heteropentamer. Part of the GPI-anchor transamidase complex, consisting of PIGK, PIGT, PIGS, PIGU and GAA1.

The protein resides in the endoplasmic reticulum membrane. It functions in the pathway glycolipid biosynthesis; glycosylphosphatidylinositol-anchor biosynthesis. In terms of biological role, component of the glycosylphosphatidylinositol-anchor (GPI-anchor) transamidase (GPI-T) complex that catalyzes the formation of the linkage between a proprotein and a GPI-anchor and participates in GPI anchored protein biosynthesis. The protein is GPI-anchor transamidase component PIGS of Rattus norvegicus (Rat).